Consider the following 407-residue polypeptide: Imidazolonepropionase (407 aa).

The Fe(3+) site is built by histidine 68 and histidine 70. The Zn(2+) site is built by histidine 68 and histidine 70. Arginine 77, tyrosine 140, and histidine 173 together coordinate 4-imidazolone-5-propanoate. Tyrosine 140 contacts N-formimidoyl-L-glutamate. Residue histidine 238 coordinates Fe(3+). Histidine 238 is a Zn(2+) binding site. Glutamine 241 serves as a coordination point for 4-imidazolone-5-propanoate. Position 313 (aspartate 313) interacts with Fe(3+). Aspartate 313 lines the Zn(2+) pocket. Residues asparagine 315 and glycine 317 each contribute to the N-formimidoyl-L-glutamate site. Residue threonine 318 participates in 4-imidazolone-5-propanoate binding.

It belongs to the metallo-dependent hydrolases superfamily. HutI family. The cofactor is Zn(2+). It depends on Fe(3+) as a cofactor.

It localises to the cytoplasm. The enzyme catalyses 4-imidazolone-5-propanoate + H2O = N-formimidoyl-L-glutamate. The protein operates within amino-acid degradation; L-histidine degradation into L-glutamate; N-formimidoyl-L-glutamate from L-histidine: step 3/3. Catalyzes the hydrolytic cleavage of the carbon-nitrogen bond in imidazolone-5-propanoate to yield N-formimidoyl-L-glutamate. It is the third step in the universal histidine degradation pathway. The polypeptide is Imidazolonepropionase (Burkholderia lata (strain ATCC 17760 / DSM 23089 / LMG 22485 / NCIMB 9086 / R18194 / 383)).